We begin with the raw amino-acid sequence, 224 residues long: Putative endoglucanase X (224 aa).

Positions 147 to 168 (QTQPTPSPSPTPTDSPLVKKGD) are disordered. The region spanning 162–224 (PLVKKGDVNL…SILKRILLRN (63 aa)) is the Dockerin domain.

It catalyses the reaction Endohydrolysis of (1-&gt;4)-beta-D-glucosidic linkages in cellulose, lichenin and cereal beta-D-glucans.. Functionally, this enzyme catalyzes the endohydrolysis of 1,4-beta-glucosidic linkages in cellulose, lichenin and cereal beta-D-glucans. The polypeptide is Putative endoglucanase X (celX) (Acetivibrio thermocellus (Hungateiclostridium thermocellum)).